A 40-amino-acid chain; its full sequence is Photosystem II reaction center protein J (40 aa).

Residues 8-28 form a helical membrane-spanning segment; sequence IPLWLIGTIAGILVIGLVGIF.

Belongs to the PsbJ family. In terms of assembly, PSII is composed of 1 copy each of membrane proteins PsbA, PsbB, PsbC, PsbD, PsbE, PsbF, PsbH, PsbI, PsbJ, PsbK, PsbL, PsbM, PsbT, PsbX, PsbY, PsbZ, Psb30/Ycf12, at least 3 peripheral proteins of the oxygen-evolving complex and a large number of cofactors. It forms dimeric complexes.

It localises to the plastid. Its subcellular location is the chloroplast thylakoid membrane. Its function is as follows. One of the components of the core complex of photosystem II (PSII). PSII is a light-driven water:plastoquinone oxidoreductase that uses light energy to abstract electrons from H(2)O, generating O(2) and a proton gradient subsequently used for ATP formation. It consists of a core antenna complex that captures photons, and an electron transfer chain that converts photonic excitation into a charge separation. The sequence is that of Photosystem II reaction center protein J from Anthoceros angustus (Hornwort).